The chain runs to 159 residues: 2-C-methyl-D-erythritol 2,4-cyclodiphosphate synthase (159 aa).

A divalent metal cation contacts are provided by D8 and H10. 4-CDP-2-C-methyl-D-erythritol 2-phosphate-binding positions include D8–H10 and H34–S35. Position 42 (H42) interacts with a divalent metal cation. Residues D56–G58, F61–D65, A100–L106, T132–E135, F139, and R142 contribute to the 4-CDP-2-C-methyl-D-erythritol 2-phosphate site.

Belongs to the IspF family. As to quaternary structure, homotrimer. A divalent metal cation is required as a cofactor.

It catalyses the reaction 4-CDP-2-C-methyl-D-erythritol 2-phosphate = 2-C-methyl-D-erythritol 2,4-cyclic diphosphate + CMP. Its pathway is isoprenoid biosynthesis; isopentenyl diphosphate biosynthesis via DXP pathway; isopentenyl diphosphate from 1-deoxy-D-xylulose 5-phosphate: step 4/6. Its function is as follows. Involved in the biosynthesis of isopentenyl diphosphate (IPP) and dimethylallyl diphosphate (DMAPP), two major building blocks of isoprenoid compounds. Catalyzes the conversion of 4-diphosphocytidyl-2-C-methyl-D-erythritol 2-phosphate (CDP-ME2P) to 2-C-methyl-D-erythritol 2,4-cyclodiphosphate (ME-CPP) with a corresponding release of cytidine 5-monophosphate (CMP). The protein is 2-C-methyl-D-erythritol 2,4-cyclodiphosphate synthase of Escherichia coli O45:K1 (strain S88 / ExPEC).